A 474-amino-acid chain; its full sequence is Sestrin homolog (474 aa).

This sequence belongs to the sestrin family.

The protein resides in the nucleus. Its subcellular location is the cytoplasm. Functionally, may function as a negative feedback regulator of TOR function. This Caenorhabditis elegans protein is Sestrin homolog.